Reading from the N-terminus, the 265-residue chain is Ni-sirohydrochlorin a,c-diamide reductive cyclase complex, component CfbC (265 aa).

It belongs to the NifH/BchL/ChlL family. As to quaternary structure, homodimer. The Ni-sirohydrochlorin a,c-diamide reductive cyclase complex is composed of a NifH homolog component CfbC and a NifD homolog component CfbD. Requires [4Fe-4S] cluster as cofactor.

The enzyme catalyses Ni-sirohydrochlorin a,c-diamide + 3 AH2 + ATP + H2O = 15,17(3)-seco-F430-17(3)-acid + 3 A + ADP + phosphate. Involved in the biosynthesis of the unique nickel-containing tetrapyrrole coenzyme F430, the prosthetic group of methyl-coenzyme M reductase (MCR), which plays a key role in methanogenesis and anaerobic methane oxidation. Catalyzes both the six-electron reduction of the tetrahydroporphyrin ring system and the gamma-lactamization of the c-acetamide side chain of Ni-sirohydrochlorin a,c-diamide to yield 15,17(3)-seco-F430-17(3)-acid (seco-F430), the last intermediate in the biosynthesis of the coenzyme F430. The polypeptide is Ni-sirohydrochlorin a,c-diamide reductive cyclase complex, component CfbC (Methanosarcina barkeri (strain Fusaro / DSM 804)).